Here is a 522-residue protein sequence, read N- to C-terminus: U4/U6 small nuclear ribonucleoprotein Prp4 (522 aa).

Over residues 1-13 the composition is skewed to polar residues; the sequence is MASSRASSTQATK. Residues 1 to 20 form a disordered region; sequence MASSRASSTQATKTKAPDDL. Lysine 27 is subject to N6-acetyllysine. 7 WD repeats span residues 229-268, 271-318, 321-360, 363-402, 405-444, 447-487, and 490-521; these read GDDR…LLHT, GHNT…PVAD, GHTV…EILH, GHSM…CIMF, GHLK…CVYT, AHQN…PLKT, and GHEG…LWMA.

Component of the precatalytic spliceosome (spliceosome B complex). Component of the U4/U6-U5 tri-snRNP complex, a building block of the precatalytic spliceosome (spliceosome B complex). The U4/U6-U5 tri-snRNP complex is composed of the U4, U6 and U5 snRNAs and at least PRPF3, PRPF4, PRPF6, PRPF8, PRPF31, SNRNP200, TXNL4A, SNRNP40, SNRPB, SNRPD1, SNRPD2, SNRPD3, SNRPE, SNRPF, SNRPG, DDX23, CD2BP2, PPIH, SNU13, EFTUD2, SART1 and USP39, plus LSM2, LSM3, LSM4, LSM5, LSM6, LSM7 and LSM8. Interacts directly with PRPF18, PPIH and PRPF3. Part of a heteromeric complex containing PPIH, PRPF3 and PRPF4 that is stable in the absence of RNA. Interacts with ERCC6.

Its subcellular location is the nucleus. The protein localises to the nucleus speckle. Plays a role in pre-mRNA splicing as component of the U4/U6-U5 tri-snRNP complex that is involved in spliceosome assembly, and as component of the precatalytic spliceosome (spliceosome B complex). The protein is U4/U6 small nuclear ribonucleoprotein Prp4 (PRPF4) of Homo sapiens (Human).